Here is a 484-residue protein sequence, read N- to C-terminus: Cytochrome P450 monooxygenase poxD (484 aa).

Residues 2 to 24 traverse the membrane as a helical segment; it reads VSPVVLATTAMIVVFLLAQRYLS. Residue C429 coordinates heme.

This sequence belongs to the cytochrome P450 family. Heme is required as a cofactor.

The protein localises to the membrane. The protein operates within secondary metabolite biosynthesis. Its function is as follows. Cytochrome P450 monooxygenase; part of the gene cluster that mediates the biosynthesis of oxaleimides, cytotoxic compounds containing an unusual disubstituted succinimide moiety. The first step of the pathway is provided by the HR-PKS poxF that serves in a new mode of collaborative biosynthesis with the PKS-NRPS poxE, by providing the olefin containing amino acid substrate via the synthesis of an ACP-bound dec-4-enoate. The cytochrome P450 monooxygenase poxM-catalyzed oxidation at the alpha-position creates the enzyme-bound 2-hydroxydec-4-enoyl-ACP thioester, which may be prone to spontaneous hydrolysis to yield 2-hydroxydec-4-enoic acid due to increased electrophilicity of the carbonyl. 2-hydroxydec-4-enoic acid can then be further oxidized by poxM to yield the alpha-ketoacid 2-oxodec-4-enoicacid, which is reductively aminated by the aminotransferase poxL to yield (S,E)-2-aminodec-4-enoic acid. The Hybrid PKS-NRPS synthetase poxE then performs condensation between the octaketide product of its PKS modules and the amino group of (S,E)-2-aminodec-4-enoic acid which is activated and incorporated by the adenylation domain. The resulting aminoacyl product can be cyclized by the Diels-Alderase PoxQ and reductively released by the reductive (R) domain of poxE to yield an aldehyde intermediate. The released aldehyde is then substrate for a Knoevenagel condensation by the hydrolyase poxO followed by an oxidation at the 5-position of the pyrrolidone ring. The presence of the olefin from the amino acid building block allows for migration of the substituted allyl group to occur. This allylic transposition reaction takes place in a conjugate addition, semipinacol-like fashion to yield a succinimide intermediate. Iterative two-electron oxidations of the C7 methyl of the succinimide intermediate to the carboxylic acid can be catalyzed by one of two remaining cytochrome P450 monooxygenasess poxC or poxD to yield oxaleimide A. Subsequent oxidation yields the maleimide scaffold oxaleimide I. Both oxaleimide A and oxaleimide I can undergo oxidative modifications in the decalin ring to yield the series of products oxaleimides B to H. The protein is Cytochrome P450 monooxygenase poxD of Penicillium oxalicum.